A 215-amino-acid polypeptide reads, in one-letter code: UPF0323 lipoprotein jhp_0217 (215 aa).

The N-terminal stretch at M1–G27 is a signal peptide. C28 carries N-palmitoyl cysteine lipidation. A lipid anchor (S-diacylglycerol cysteine) is attached at C28. The segment covering Q158–R169 has biased composition (polar residues). The disordered stretch occupies residues Q158–A215. A compositionally biased stretch (low complexity) spans S170 to S183. The span at M184 to F195 shows a compositional bias: polar residues. Low complexity predominate over residues S197 to S208.

The protein belongs to the UPF0323 family.

The protein resides in the cell membrane. The polypeptide is UPF0323 lipoprotein jhp_0217 (Helicobacter pylori (strain J99 / ATCC 700824) (Campylobacter pylori J99)).